The primary structure comprises 232 residues: 2,3-bisphosphoglycerate-dependent phosphoglycerate mutase (232 aa).

Substrate is bound by residues 10–17 (RHGESQWN), 23–24 (TG), R62, 89–92 (ERHY), K100, 116–117 (RR), and 186–187 (GN). H11 (tele-phosphohistidine intermediate) is an active-site residue. E89 serves as the catalytic Proton donor/acceptor.

It belongs to the phosphoglycerate mutase family. BPG-dependent PGAM subfamily. In terms of assembly, homodimer.

The enzyme catalyses (2R)-2-phosphoglycerate = (2R)-3-phosphoglycerate. It participates in carbohydrate degradation; glycolysis; pyruvate from D-glyceraldehyde 3-phosphate: step 3/5. Catalyzes the interconversion of 2-phosphoglycerate and 3-phosphoglycerate. The protein is 2,3-bisphosphoglycerate-dependent phosphoglycerate mutase of Blochmanniella pennsylvanica (strain BPEN).